The sequence spans 69 residues: AFAGVLADADIKAALAGCAAAESFNYKTFFKFFAIIDQDHSGFIEEEELKLFLQTFSAGARALSDAETK.

A1 is modified (N-acetylalanine). One can recognise an EF-hand domain in the interval 24 to 59 (FNYKTFFKFFAIIDQDHSGFIEEEELKLFLQTFSAG). Positions 37, 39, 41, 43, 45, and 48 each coordinate Ca(2+).

It belongs to the parvalbumin family.

Its function is as follows. In muscle, parvalbumin is thought to be involved in relaxation after contraction. It binds two calcium ions. In Merluccius polli (Benguela hake), this protein is Parvalbumin beta 3.